The primary structure comprises 396 residues: Putative amidohydrolase YhaA (396 aa).

The active site involves D85. The active-site Proton acceptor is the E143. Zn(2+) contacts are provided by E144, R182, and H368.

Belongs to the peptidase M20A family. Zn(2+) serves as cofactor. It depends on Co(2+) as a cofactor.

This chain is Putative amidohydrolase YhaA (yhaA), found in Bacillus subtilis (strain 168).